The chain runs to 337 residues: Vacuolar protein sorting-associated protein 26B-B (337 aa).

Residues 313 to 337 (RFEGTSHPETRPQHSGAAALEQEHE) form a disordered region.

This sequence belongs to the VPS26 family. In terms of assembly, component of the heterotrimeric retromer cargo-selective complex (CSC) which is believed to associate with variable sorting nexins to form functionally distinct retromer complex variants.

Its subcellular location is the cytoplasm. The protein localises to the membrane. It is found in the endosome. Its function is as follows. Acts as a component of the retromer cargo-selective complex (CSC). The CSC is believed to be the core functional component of retromer or respective retromer complex variants acting to prevent missorting of selected transmembrane cargo proteins into the lysosomal degradation pathway. Retromer mediates retrograde transport of cargo proteins from endosomes to the trans-Golgi network (TGN). The sequence is that of Vacuolar protein sorting-associated protein 26B-B (vps26b-b) from Xenopus laevis (African clawed frog).